An 806-amino-acid chain; its full sequence is MIPVAEFKQFTEQQPAFKVLKPWWDVLAEYITYAMLMIGVFGCTLQVTQDKIICLPNHTSADVVSQITCQEYDQQSPPSNDSDLETTIPPPTATSSPPREMSGLRNNLDLQQYSFINQMCYETALHWYAKYFPYLVVIHTLIFIICGNFWFKFPGTSSKIEHFISILGKCFDSPWTTRALSEVSGESSQEKPSQERSIDRELSKPNFEEGSPATADLPIAEKLVAETSSASVLDKKEGEQAKALFEKVKKFRHHVEEGDLLYSMYMRQTVLKVCKFVLITIYNAVLVGKIHFIVPCSVHTEDMTGYNSFCCNHTKAHLFSKLAITYLCFLGVYGLTCLYTLYWLFRRPLKEYSFRSVREETGIGDIPDVKNDFAFVLHLVDQYDSLYSKRFAVFLSEVSESRLRQLNLNHEWPADKLRQKLQHTPEGRLELHLFKLPGLPDTVFEVAEMESLKLEMVNEALIPPLVSKLVRLEELSLINCTAKVQHASLAYLRDHLRILQVKFDDIKEIPLWIFSLRALEELHLFGWLSQDLSKNPALESLRELKSLKVLTIKSNLSKIPATVADVAGHLQKFSIHNDGTKLLTLNALKRLALVKELELVRCELERIPHAVFSLTNLQVLDLKENTLHTIEEIISLQHCRKLSVLRLWHNQIAYIPEHIRKLKGLEELSLNRNKILVIPSQLFLCNKLRHLDLSNNEIRELPPEIGVLQLLQYLGLSGNFLEDLPNELFFCQKLKTLKLGQNRLGNLSPKVGSLVCLVKLELKGNRMDTLPPELGNCVSLKRSGLTVEPSLFETLPVEVRDKLKED.

Topologically, residues 1–22 (MIPVAEFKQFTEQQPAFKVLKP) are cytoplasmic. Residues 23–43 (WWDVLAEYITYAMLMIGVFGC) form a helical membrane-spanning segment. The Extracellular portion of the chain corresponds to 44 to 130 (TLQVTQDKII…YETALHWYAK (87 aa)). A disulfide bridge links Cys54 with Cys311. Residues Asn57 and Asn80 are each glycosylated (N-linked (GlcNAc...) asparagine). Polar residues predominate over residues 72–81 (YDQQSPPSND). Residues 72 to 103 (YDQQSPPSNDSDLETTIPPPTATSSPPREMSG) form a disordered region. Residues 131–151 (YFPYLVVIHTLIFIICGNFWF) form a helical membrane-spanning segment. The Cytoplasmic portion of the chain corresponds to 152–275 (KFPGTSSKIE…MRQTVLKVCK (124 aa)). The tract at residues 182–213 (EVSGESSQEKPSQERSIDRELSKPNFEEGSPA) is disordered. The segment covering 188–207 (SQEKPSQERSIDRELSKPNF) has biased composition (basic and acidic residues). Residues 276–296 (FVLITIYNAVLVGKIHFIVPC) traverse the membrane as a helical segment. The Extracellular portion of the chain corresponds to 297-323 (SVHTEDMTGYNSFCCNHTKAHLFSKLA). N-linked (GlcNAc...) asparagine glycosylation is present at Asn312. A helical membrane pass occupies residues 324 to 344 (ITYLCFLGVYGLTCLYTLYWL). The Cytoplasmic segment spans residues 345–806 (FRRPLKEYSF…VEVRDKLKED (462 aa)). LRR repeat units follow at residues 544-566 (LKSL…VADV), 569-589 (HLQK…NALK), 593-614 (LVKE…VFSL), 616-637 (NLQV…ISLQ), 641-662 (KLSV…IRKL), 664-685 (GLEE…LFLC), 687-708 (KLRH…IGVL), 710-731 (LLQY…LFFC), 733-754 (KLKT…VGSL), and 756-777 (CLVK…LGNC).

This sequence belongs to the LRRC8 family. Heterohexamer; oligomerizes with other LRRC8 proteins (lrrc8a, lrrc8c, lrrc8d and/or lrrc8b) to form a heterohexamer. Detected in a channel complex that contains lrrc8a, lrrc8c and lrrc8e. In vivo, the subunit composition may depend primarily on expression levels, and heterooligomeric channels containing various proportions of the different LRRC8 proteins may coexist.

The protein resides in the cell membrane. Its subcellular location is the endoplasmic reticulum membrane. It is found in the lysosome membrane. It carries out the reaction chloride(in) = chloride(out). It catalyses the reaction iodide(out) = iodide(in). The enzyme catalyses taurine(out) = taurine(in). The catalysed reaction is 2',3'-cGAMP(out) = 2',3'-cGAMP(in). Its function is as follows. Non-essential component of the volume-regulated anion channel (VRAC, also named VSOAC channel), an anion channel required to maintain a constant cell volume in response to extracellular or intracellular osmotic changes. The VRAC channel conducts iodide better than chloride and can also conduct organic osmolytes like taurine. Mediates efflux of amino acids, such as aspartate, in response to osmotic stress. The VRAC channel also mediates transport of immunoreactive cyclic dinucleotide GMP-AMP (2'-3'-cGAMP), an immune messenger produced in response to DNA virus in the cytosol. Channel activity requires lrrc8a plus at least one other family member (lrrc8b, lrrc8c, lrrc8d or lrrc8e); channel characteristics depend on the precise subunit composition. Also plays a role in lysosome homeostasis by forming functional lysosomal VRAC channels in response to low cytoplasmic ionic strength condition: lysosomal VRAC channels are necessary for the formation of large lysosome-derived vacuoles, which store and then expel excess water to maintain cytosolic water homeostasis. The sequence is that of Volume-regulated anion channel subunit LRRC8E from Xenopus tropicalis (Western clawed frog).